The chain runs to 133 residues: Transmembrane protein 60 (133 aa).

A run of 4 helical transmembrane segments spans residues 5–25 (LAQRVLLTWLFTLLFLIMLVL), 35–55 (WFLIFIPVWIFDTILLVMLIV), 78–98 (AWYLIAMLLKLAFCLALCAKL), and 110–130 (FIPLWALLAGALTELGYNVFF).

Its subcellular location is the membrane. This is Transmembrane protein 60 (Tmem60) from Mus musculus (Mouse).